The following is a 504-amino-acid chain: Glucose-6-phosphate isomerase (504 aa).

The active-site Proton donor is the Glu-333. Catalysis depends on residues His-364 and Lys-473.

Belongs to the GPI family.

It localises to the cytoplasm. It catalyses the reaction alpha-D-glucose 6-phosphate = beta-D-fructose 6-phosphate. It functions in the pathway carbohydrate biosynthesis; gluconeogenesis. The protein operates within carbohydrate degradation; glycolysis; D-glyceraldehyde 3-phosphate and glycerone phosphate from D-glucose: step 2/4. Functionally, catalyzes the reversible isomerization of glucose-6-phosphate to fructose-6-phosphate. The protein is Glucose-6-phosphate isomerase of Xanthomonas oryzae pv. oryzae (strain PXO99A).